The chain runs to 589 residues: 2-succinyl-5-enolpyruvyl-6-hydroxy-3-cyclohexene-1-carboxylate synthase (589 aa).

It belongs to the TPP enzyme family. MenD subfamily. In terms of assembly, homodimer. Mg(2+) is required as a cofactor. It depends on Mn(2+) as a cofactor. Requires thiamine diphosphate as cofactor.

The enzyme catalyses isochorismate + 2-oxoglutarate + H(+) = 5-enolpyruvoyl-6-hydroxy-2-succinyl-cyclohex-3-ene-1-carboxylate + CO2. It functions in the pathway quinol/quinone metabolism; 1,4-dihydroxy-2-naphthoate biosynthesis; 1,4-dihydroxy-2-naphthoate from chorismate: step 2/7. The protein operates within quinol/quinone metabolism; menaquinone biosynthesis. In terms of biological role, catalyzes the thiamine diphosphate-dependent decarboxylation of 2-oxoglutarate and the subsequent addition of the resulting succinic semialdehyde-thiamine pyrophosphate anion to isochorismate to yield 2-succinyl-5-enolpyruvyl-6-hydroxy-3-cyclohexene-1-carboxylate (SEPHCHC). This Myxococcus xanthus (strain DK1622) protein is 2-succinyl-5-enolpyruvyl-6-hydroxy-3-cyclohexene-1-carboxylate synthase.